Reading from the N-terminus, the 500-residue chain is MSEQEIFRRKSLEELKSRGIDPYPADEYIVTDYSTEIKRGFREDSPRWEVSVAGRMMSRRIMGKVSFVELQDSVGRIQLYIKCDSLCPNENKDLYYIVFKKLLDIGDFIGIKGYVFCTQTGEISIHVNSLTLLSKSLRPLPIVKSKDGMTYDSYNDVELRYRQRYVDLIVNEGTKDIFLKRTKIFNSVRSFFNEKGYIEVDTPVLQSIPGGAAARPFVTHHNALDIPCYLRIANELYLKRLIVGGFEGVYEFSRNFRNEGIDKVHNPEFTVVEVYVSYKDYKWMMNFTEQMLEHICIEILGSTELKIGEYIINFKAPYRRITMIDVIEENTGVNIAGMNENQLREVCRFLHIEEDKTMSSGKLIDEIFGKKCEWKYIQPTFIIDYPKEMSPLCKCHRQNAELTERFELIVNGFELANAYSELNDPIDQRKRFEDQLKLSKKGDNEAMFIDQDFLRALEYGMPPTSGMGIGMDRLVMLLTKQTSIQEVLLFPHMRPEKLDY.

Positions 407 and 414 each coordinate Mg(2+).

The protein belongs to the class-II aminoacyl-tRNA synthetase family. In terms of assembly, homodimer. Mg(2+) is required as a cofactor.

The protein localises to the cytoplasm. The enzyme catalyses tRNA(Lys) + L-lysine + ATP = L-lysyl-tRNA(Lys) + AMP + diphosphate. The protein is Lysine--tRNA ligase of Azobacteroides pseudotrichonymphae genomovar. CFP2.